Consider the following 314-residue polypeptide: Nodulation protein D 2 (314 aa).

Positions 6-63 (LDLNLLVVLDALMTERNLTAAARSINLSQPAMSAAVARLRTNFRDDLFAMAGREFIPT) constitute an HTH lysR-type domain. Residues 23–42 (LTAAARSINLSQPAMSAAVA) constitute a DNA-binding region (H-T-H motif).

This sequence belongs to the LysR transcriptional regulatory family.

Functionally, nodD regulates the expression of the nodABCFE genes which encode other nodulation proteins. NodD is also a negative regulator of its own expression. Binds flavonoids as inducers. The protein is Nodulation protein D 2 (nodD2) of Rhizobium tropici.